We begin with the raw amino-acid sequence, 167 residues long: Homing endonuclease I-ApeII (167 aa).

This sequence belongs to the LAGLIDADG endonuclease family.

In terms of biological role, endonuclease involved in rRNA intron I-gamma homing. This is Homing endonuclease I-ApeII (apeII) from Aeropyrum pernix (strain ATCC 700893 / DSM 11879 / JCM 9820 / NBRC 100138 / K1).